A 101-amino-acid polypeptide reads, in one-letter code: Gamma-secretase subunit PEN-2 (101 aa).

Topologically, residues 1–17 are cytoplasmic; that stretch reads MNLERVSNEEKLNLCRK. Positions 18-36 form an intramembrane region, helical; the sequence is YYLGGFAFLPFLWLVNIFW. Topologically, residues 37 to 57 are cytoplasmic; sequence FFREAFLAPAYTEQSQIKGYV. A helical membrane pass occupies residues 58–78; that stretch reads WRSAVGFLFWVIILATWITIF. Residues 79–101 are Lumenal-facing; it reads QIYRPRWGALGDYLSFTIPLGTP.

This sequence belongs to the PEN-2 family. The functional gamma-secretase complex is composed of at least four polypeptides: a presenilin homodimer (PSEN1 or PSEN2), nicastrin (NCSTN), APH1 (APH1A or APH1B) and PSENEN.

The protein resides in the endoplasmic reticulum membrane. It localises to the golgi apparatus. It is found in the golgi stack membrane. Its subcellular location is the cell membrane. The protein localises to the membrane. Its function is as follows. Essential subunit of the gamma-secretase complex, an endoprotease complex that catalyzes the intramembrane cleavage of integral membrane proteins such as Notch receptors and APP (amyloid-beta precursor protein). The gamma-secretase complex plays a role in Notch and Wnt signaling cascades and regulation of downstream processes via its role in processing key regulatory proteins, and by regulating cytosolic CTNNB1 levels. PSENEN modulates both endoproteolysis of presenilin and gamma-secretase activity. This Mus musculus (Mouse) protein is Gamma-secretase subunit PEN-2 (Psenen).